Reading from the N-terminus, the 118-residue chain is Large ribosomal subunit protein uL22 (118 aa).

Belongs to the universal ribosomal protein uL22 family. Part of the 50S ribosomal subunit.

Its function is as follows. This protein binds specifically to 23S rRNA; its binding is stimulated by other ribosomal proteins, e.g. L4, L17, and L20. It is important during the early stages of 50S assembly. It makes multiple contacts with different domains of the 23S rRNA in the assembled 50S subunit and ribosome. In terms of biological role, the globular domain of the protein is located near the polypeptide exit tunnel on the outside of the subunit, while an extended beta-hairpin is found that lines the wall of the exit tunnel in the center of the 70S ribosome. The chain is Large ribosomal subunit protein uL22 from Prosthecochloris aestuarii (strain DSM 271 / SK 413).